Consider the following 96-residue polypeptide: MKIAITITVVMLSICCSSASSDICPGFLQVLEALLMESESGYVASLKPFNPGSDLQNAGTQLKRLVDTLPQETRINIMKLTEKILTSPLCKQDLRF.

The signal sequence occupies residues 1 to 21; the sequence is MKIAITITVVMLSICCSSASS.

It belongs to the secretoglobin family. In terms of assembly, antiparallel homodimer; disulfide-linked. Interaction with LMBR1L is controversial. Club cells (nonciliated cells of the surface epithelium of the pulmonary airways).

The protein resides in the secreted. Binds phosphatidylcholine, phosphatidylinositol, polychlorinated biphenyls (PCB) and weakly progesterone, potent inhibitor of phospholipase A2. This is Uteroglobin (Scgb1a1) from Mus musculus (Mouse).